The following is a 520-amino-acid chain: Cholesterol side-chain cleavage enzyme, mitochondrial (520 aa).

Residues 1–39 constitute a mitochondrion transit peptide; that stretch reads MLARGLPLRSALVKACPPILSTVGEGWGHHRVGTGEGAG. C461 contacts heme.

It belongs to the cytochrome P450 family. As to quaternary structure, interacts with FDX1/adrenodoxin. The cofactor is heme. Detected in adrenal cortex and corpus luteum (at protein level).

Its subcellular location is the mitochondrion inner membrane. It carries out the reaction 6 reduced [adrenodoxin] + cholesterol + 3 O2 + 6 H(+) = 4-methylpentanal + pregnenolone + 6 oxidized [adrenodoxin] + 4 H2O. The catalysed reaction is 2 reduced [adrenodoxin] + cholesterol + O2 + 2 H(+) = (22R)-hydroxycholesterol + 2 oxidized [adrenodoxin] + H2O. The enzyme catalyses (22R)-hydroxycholesterol + 2 reduced [adrenodoxin] + O2 + 2 H(+) = (20R,22R)-20,22-dihydroxycholesterol + 2 oxidized [adrenodoxin] + H2O. It catalyses the reaction (20R,22R)-20,22-dihydroxycholesterol + 2 reduced [adrenodoxin] + O2 + 2 H(+) = 4-methylpentanal + pregnenolone + 2 oxidized [adrenodoxin] + 2 H2O. Its pathway is lipid metabolism; C21-steroid hormone metabolism. The protein operates within steroid metabolism; cholesterol metabolism. A cytochrome P450 monooxygenase that catalyzes the side-chain hydroxylation and cleavage of cholesterol to pregnenolone, the precursor of most steroid hormones. Catalyzes three sequential oxidation reactions of cholesterol, namely the hydroxylation at C22 followed with the hydroxylation at C20 to yield 20R,22R-hydroxycholesterol that is further cleaved between C20 and C22 to yield the C21-steroid pregnenolone and 4-methylpentanal. Mechanistically, uses molecular oxygen inserting one oxygen atom into a substrate and reducing the second into a water molecule. Two electrons are provided by NADPH via a two-protein mitochondrial transfer system comprising flavoprotein FDXR (adrenodoxin/ferredoxin reductase) and nonheme iron-sulfur protein FDX1 or FDX2 (adrenodoxin/ferredoxin). The sequence is that of Cholesterol side-chain cleavage enzyme, mitochondrial (CYP11A1) from Bos taurus (Bovine).